A 240-amino-acid chain; its full sequence is MGRRIQGQRRGRGGPTFRAPSHRYKAELSHKKLEDVDTITGEIVGIEHDPARSAPLAEIEFEDDDRRLVLAPEGVRVGDTIQVGVSAEIKPGNTLPLAEIPEGVPVCNVESNRGDGGKFARASGVSATLLTHDRDVAVVQLPSGEVKRLDPQCRATIGVVAGGGRTEKPFVKAGNKYHKMKARGTKYPRVRGVAMNAVDHPFGGGGRQHPGQPKSVSRDAPPGRKVGDIASKRTGRGSNK.

The segment covering 1–12 has biased composition (basic residues); that stretch reads MGRRIQGQRRGR. 2 disordered regions span residues 1 to 21 and 198 to 240; these read MGRR…RAPS and VDHP…GSNK. Positions 221–231 are enriched in basic and acidic residues; it reads PPGRKVGDIAS.

Belongs to the universal ribosomal protein uL2 family. As to quaternary structure, part of the 50S ribosomal subunit. Forms a bridge to the 30S subunit in the 70S ribosome.

One of the primary rRNA binding proteins. Required for association of the 30S and 50S subunits to form the 70S ribosome, for tRNA binding and peptide bond formation. It has been suggested to have peptidyltransferase activity; this is somewhat controversial. Makes several contacts with the 16S rRNA in the 70S ribosome. The polypeptide is Large ribosomal subunit protein uL2 (Halorubrum lacusprofundi (strain ATCC 49239 / DSM 5036 / JCM 8891 / ACAM 34)).